The chain runs to 429 residues: MKQAWQQYLQIIQQVVKPALGCTEPIAAAYAAAVAARQLGCKPVRLEVVVSDNLYKNSMGVYVPGTGKIGLAIAAAAGAIGGNAEAGLEVLAAITPAQVAEAQELIDAGQVQVSRTSAPEFIYCRVRLLGLDAEGTEHSAEVTLCGGHTRIVEQRCNDEVTFTAEQGQGGATGAICDGVDISIAAIHEFATQVEFEQIRFILQASELNGKLSDEGMNNPYGLEIGRTMQQNIQAGLIGEDVMNRIVMRTAAASDARMGGASLPAMSNFGSGNQGIAATIPVVVIAERFGASEEQLARALIMSHLGAIYIKSHYPPLSAFCGNTVTSAAAAMAMVYLAGGSFEQSCHAIQNVLSDSAGMVCDGAKASCAMKVSTSSGAAVRGFLMALNSHGVSGQGIVAGNVEQTIRNVGQMVKDGMSATDSTIIDIMSA.

Belongs to the UPF0597 family.

In Aeromonas hydrophila subsp. hydrophila (strain ATCC 7966 / DSM 30187 / BCRC 13018 / CCUG 14551 / JCM 1027 / KCTC 2358 / NCIMB 9240 / NCTC 8049), this protein is UPF0597 protein AHA_1619.